Consider the following 660-residue polypeptide: Dual specificity mitogen-activated protein kinase kinase 1 (660 aa).

Residues 1–57 (MNTNTNTNTNISSSGNNIINTPTTNNNNKNNNNNNNNNNNSNNSNNNSSNNNNNNNN) show a composition bias toward low complexity. Disordered stretches follow at residues 1 to 60 (MNTN…NAVG), 105 to 169 (KGES…FNNL), and 204 to 229 (NNNYNNYNNNNNSNNNNNNYNNSNNN). Lys-105 participates in a covalent cross-link: Glycyl lysine isopeptide (Lys-Gly) (interchain with G-Cter in SUMO). A compositionally biased stretch (polar residues) spans 123–148 (LHSNLNPQLLASPTSSESMDFNQGFY). The segment covering 149–169 (NNNNNNNNNNNNNNLNNFNNL) has biased composition (low complexity). The 350-residue stretch at 292 to 641 (LKIIRVLGRG…ASNLLNHEFV (350 aa)) folds into the Protein kinase domain. Residues 298–306 (LGRGAGGVV) and Lys-321 contribute to the ATP site. Asp-414 functions as the Proton acceptor in the catalytic mechanism. 2 disordered regions span residues 491 to 510 (SNLPHQQQQPLQQQQQQQQQ) and 539 to 573 (NNSNNNIRNSNNNNNNNNNNNNNNNNNNNNNVLDI). Low complexity-rich tracts occupy residues 496-510 (QQQQPLQQQQQQQQQ) and 539-569 (NNSNNNIRNSNNNNNNNNNNNNNNNNNNNNN).

The protein belongs to the protein kinase superfamily. STE Ser/Thr protein kinase family. MAP kinase kinase subfamily. Interacts with mip1. Requires Mg(2+) as cofactor. Sumoylated and ubiquitinated in response to chemoattractant stimulation. Sumoylation is linked to kinase activation and results in translocation.

It is found in the cytoplasm. It localises to the nucleus. The enzyme catalyses L-seryl-[protein] + ATP = O-phospho-L-seryl-[protein] + ADP + H(+). The catalysed reaction is L-threonyl-[protein] + ATP = O-phospho-L-threonyl-[protein] + ADP + H(+). It carries out the reaction L-tyrosyl-[protein] + ATP = O-phospho-L-tyrosyl-[protein] + ADP + H(+). In terms of biological role, required for cAMP-mediated activation of guanylyl cyclase activity and plays an essential role in aggregation, morphogenesis, and chemotaxis. Appears to act upstream of erk1 but not erk2. In Dictyostelium discoideum (Social amoeba), this protein is Dual specificity mitogen-activated protein kinase kinase 1.